The primary structure comprises 601 residues: NADH-quinone oxidoreductase subunit C/D (601 aa).

An NADH dehydrogenase I subunit C region spans residues 1–191; the sequence is MKLTREFPSN…DPFMLDAVKQ (191 aa). The NADH dehydrogenase I subunit D stretch occupies residues 215-601; the sequence is DYMFLNLGPN…IDFVMSDVDR (387 aa).

In the N-terminal section; belongs to the complex I 30 kDa subunit family. It in the C-terminal section; belongs to the complex I 49 kDa subunit family. As to quaternary structure, NDH-1 is composed of 13 different subunits. Subunits NuoB, CD, E, F, and G constitute the peripheral sector of the complex.

The protein localises to the cell inner membrane. It catalyses the reaction a quinone + NADH + 5 H(+)(in) = a quinol + NAD(+) + 4 H(+)(out). NDH-1 shuttles electrons from NADH, via FMN and iron-sulfur (Fe-S) centers, to quinones in the respiratory chain. The immediate electron acceptor for the enzyme in this species is believed to be ubiquinone. Couples the redox reaction to proton translocation (for every two electrons transferred, four hydrogen ions are translocated across the cytoplasmic membrane), and thus conserves the redox energy in a proton gradient. The sequence is that of NADH-quinone oxidoreductase subunit C/D from Aeromonas hydrophila subsp. hydrophila (strain ATCC 7966 / DSM 30187 / BCRC 13018 / CCUG 14551 / JCM 1027 / KCTC 2358 / NCIMB 9240 / NCTC 8049).